Consider the following 310-residue polypeptide: Malate dehydrogenase (310 aa).

NAD(+)-binding positions include glycine 7–glycine 12 and aspartate 32. Arginine 81 and arginine 87 together coordinate substrate. Residues asparagine 94 and valine 117 to asparagine 119 each bind NAD(+). 2 residues coordinate substrate: asparagine 119 and arginine 150. Histidine 174 functions as the Proton acceptor in the catalytic mechanism.

This sequence belongs to the LDH/MDH superfamily. MDH type 3 family.

The catalysed reaction is (S)-malate + NAD(+) = oxaloacetate + NADH + H(+). In terms of biological role, catalyzes the reversible oxidation of malate to oxaloacetate. This Chlorobium luteolum (strain DSM 273 / BCRC 81028 / 2530) (Pelodictyon luteolum) protein is Malate dehydrogenase.